We begin with the raw amino-acid sequence, 462 residues long: Glycine--tRNA ligase (462 aa).

Arg-100 and Glu-174 together coordinate substrate. ATP is bound by residues 206 to 208 (RNE), 216 to 221 (FRTREF), 290 to 291 (EL), and 334 to 337 (GADR). Substrate is bound at residue 221 to 225 (FEQME). 330 to 334 (EPSLG) contacts substrate.

The protein belongs to the class-II aminoacyl-tRNA synthetase family. In terms of assembly, homodimer.

Its subcellular location is the cytoplasm. It catalyses the reaction tRNA(Gly) + glycine + ATP = glycyl-tRNA(Gly) + AMP + diphosphate. Its function is as follows. Catalyzes the attachment of glycine to tRNA(Gly). This is Glycine--tRNA ligase from Ruminiclostridium cellulolyticum (strain ATCC 35319 / DSM 5812 / JCM 6584 / H10) (Clostridium cellulolyticum).